We begin with the raw amino-acid sequence, 228 residues long: MGQKVHPTGIRLGIVKEHTSVWYADGATYADYLLKDLKTREYLQDKLKSASVSRIDIHRPAQTARITIHTARPGIVIGKKGEDVEKLRQDLTKQMGVPVHINIEEIRKPELDAMLVAQSVAQQLERRVMFRRAMKRAVQNAMRIGAKGIKIQVSGRLGGAEIARTEWYREGRVPLHTLRADIDYNTYEAHTTYGVIGVKVWIFKGEVIGGRQEELKPQAPAPRKKAAK.

The 69-residue stretch at 39-107 (TREYLQDKLK…PVHINIEEIR (69 aa)) folds into the KH type-2 domain.

The protein belongs to the universal ribosomal protein uS3 family. Part of the 30S ribosomal subunit. Forms a tight complex with proteins S10 and S14.

Its function is as follows. Binds the lower part of the 30S subunit head. Binds mRNA in the 70S ribosome, positioning it for translation. This is Small ribosomal subunit protein uS3 from Pseudomonas putida (strain ATCC 700007 / DSM 6899 / JCM 31910 / BCRC 17059 / LMG 24140 / F1).